Consider the following 172-residue polypeptide: Cytochrome c oxidase subunit 4 isoform 2, mitochondrial (172 aa).

A mitochondrion-targeting transit peptide spans 1–34; the sequence is MFSRAARSLVMRTGLRTRGTGTHSPGDAAGSQRR. Positions 13–22 are enriched in low complexity; that stretch reads TGLRTRGTGT. Positions 13-32 are disordered; that stretch reads TGLRTRGTGTHSPGDAAGSQ. Residues 35 to 101 are Mitochondrial matrix-facing; it reads MTPYVDCYAQ…TFAEMNHRSN (67 aa). Residues 102–127 form a helical membrane-spanning segment; the sequence is EWKTVMGCVFFFIGFTALVIWWQRVY. Topologically, residues 128 to 172 are mitochondrial intermembrane; that stretch reads VFPKKVVTLTEERKAQQLQRLLDMKSNPIQGLAAHWDYEKKEWKK.

The protein belongs to the cytochrome c oxidase IV family. As to quaternary structure, component of the cytochrome c oxidase (complex IV, CIV), a multisubunit enzyme composed of 14 subunits. The complex is composed of a catalytic core of 3 subunits MT-CO1, MT-CO2 and MT-CO3, encoded in the mitochondrial DNA, and 11 supernumerary subunits COX4I, COX5A, COX5B, COX6A, COX6B, COX6C, COX7A, COX7B, COX7C, COX8 and NDUFA4, which are encoded in the nuclear genome. The complex exists as a monomer or a dimer and forms supercomplexes (SCs) in the inner mitochondrial membrane with NADH-ubiquinone oxidoreductase (complex I, CI) and ubiquinol-cytochrome c oxidoreductase (cytochrome b-c1 complex, complex III, CIII), resulting in different assemblies (supercomplex SCI(1)III(2)IV(1) and megacomplex MCI(2)III(2)IV(2)).

The protein localises to the mitochondrion inner membrane. Its pathway is energy metabolism; oxidative phosphorylation. Component of the cytochrome c oxidase, the last enzyme in the mitochondrial electron transport chain which drives oxidative phosphorylation. The respiratory chain contains 3 multisubunit complexes succinate dehydrogenase (complex II, CII), ubiquinol-cytochrome c oxidoreductase (cytochrome b-c1 complex, complex III, CIII) and cytochrome c oxidase (complex IV, CIV), that cooperate to transfer electrons derived from NADH and succinate to molecular oxygen, creating an electrochemical gradient over the inner membrane that drives transmembrane transport and the ATP synthase. Cytochrome c oxidase is the component of the respiratory chain that catalyzes the reduction of oxygen to water. Electrons originating from reduced cytochrome c in the intermembrane space (IMS) are transferred via the dinuclear copper A center (CU(A)) of subunit 2 and heme A of subunit 1 to the active site in subunit 1, a binuclear center (BNC) formed by heme A3 and copper B (CU(B)). The BNC reduces molecular oxygen to 2 water molecules using 4 electrons from cytochrome c in the IMS and 4 protons from the mitochondrial matrix. The polypeptide is Cytochrome c oxidase subunit 4 isoform 2, mitochondrial (Cox4i2) (Mus musculus (Mouse)).